Consider the following 271-residue polypeptide: Putative carboxymethylenebutenolidase (271 aa).

Active-site residues include Cys147, Asp204, and His236.

It belongs to the dienelactone hydrolase family.

It carries out the reaction 2-(5-oxo-2,5-dihydrofuran-2-ylidene)acetate + H2O = 4-oxohex-2-enedioate + H(+). This is Putative carboxymethylenebutenolidase (ysgA) from Escherichia coli (strain K12).